Reading from the N-terminus, the 479-residue chain is GTPase Der (479 aa).

EngA-type G domains follow at residues 3–167 and 191–366; these read FTLA…EAAA and LQIA…ATWN. Residues 9 to 16, 56 to 60, 119 to 122, 197 to 204, 244 to 248, and 309 to 312 contribute to the GTP site; these read GRPNVGKS, DTAGL, NKAE, GRPNAGKS, DTAGM, and NKWD. The region spanning 367-453 is the KH-like domain; that stretch reads TRISTARLNQ…RLWMRSQADD (87 aa). A disordered region spans residues 449-479; that stretch reads SQADDNPYKNRKKSTPSRLNKHVRKGETKKG. Over residues 457 to 472 the composition is skewed to basic residues; sequence KNRKKSTPSRLNKHVR.

This sequence belongs to the TRAFAC class TrmE-Era-EngA-EngB-Septin-like GTPase superfamily. EngA (Der) GTPase family. In terms of assembly, associates with the 50S ribosomal subunit.

In terms of biological role, GTPase that plays an essential role in the late steps of ribosome biogenesis. The protein is GTPase Der of Jannaschia sp. (strain CCS1).